The sequence spans 139 residues: AVCVSLLGAANIPPHPFNLINFMKMIRYTIPCEKTWGEYVDYGCYCGVGGSGRPIDALDRCCYVHDNCYGDAEKKHKCNPKMQSYSYKLTKRTTSAMVPQVLVHVLSVIVTARQPSASAILNTSSGTRILTPRDIADDI.

The first 9 residues, 1 to 9 (AVCVSLLGA), serve as a signal peptide directing secretion. Residues 10–17 (ANIPPHPF) constitute a propeptide that is removed on maturation. 3 residues coordinate Ca(2+): Y45, G47, and G49. C46 and C62 are oxidised to a cystine. H65 is an active-site residue. D66 lines the Ca(2+) pocket.

Belongs to the phospholipase A2 family. Group I subfamily. D49 sub-subfamily. In terms of assembly, heterodimer; disulfide-linked. The A chains have phospholipase A2 activity and the B chains show homology with the basic protease inhibitors. The cofactor is Ca(2+). As to expression, expressed by the venom gland.

The protein localises to the secreted. It catalyses the reaction a 1,2-diacyl-sn-glycero-3-phosphocholine + H2O = a 1-acyl-sn-glycero-3-phosphocholine + a fatty acid + H(+). Functionally, snake venom phospholipase A2 (PLA2) that shows presynaptic neurotoxicity. PLA2 catalyzes the calcium-dependent hydrolysis of the 2-acyl groups in 3-sn-phosphoglycerides. This is Basic phospholipase A2 beta-bungarotoxin A2 chain from Bungarus candidus (Malayan krait).